A 984-amino-acid polypeptide reads, in one-letter code: Translation initiation factor IF-2 (984 aa).

2 disordered regions span residues 92–267 (KKRT…ERRR) and 280–392 (MNAP…EEHV). Residues 104–123 (PATPEVQPVAEAPAAAPAAP) are compositionally biased toward low complexity. Over residues 124 to 177 (RIDEAELARREEEARRQAELIRRQEEELAEKRRLREEAEAREREQAEKAERAEQ) the composition is skewed to basic and acidic residues. A compositionally biased stretch (low complexity) spans 193–235 (DAAAAAPAKEAAKPAAAPVAAAAAAAEQQAADTKLAAQTAATQ). Basic and acidic residues-rich tracts occupy residues 236 to 267 (AKEDAKAKAAAESKARADEEAARAKDLDERRR) and 291 to 302 (KAPEKPQPEKAA). Positions 310 to 335 (PAAPAARPGAPAAPGAAAAPGAAGAG) are enriched in low complexity. The segment covering 351–361 (PAKKKEIKTRG) has biased composition (basic and acidic residues). Residues 363–375 (ASGGVGRGNWRGG) show a composition bias toward gly residues. Residues 381–392 (GSNDRGGHEEHV) are compositionally biased toward basic and acidic residues. The region spanning 484 to 653 (PRAPVVTVMG…LLQAEVLELK (170 aa)) is the tr-type G domain. Positions 493-500 (GHVDHGKT) are G1. GTP is bound at residue 493 to 500 (GHVDHGKT). The G2 stretch occupies residues 518–522 (GITQH). The G3 stretch occupies residues 539–542 (DTPG). GTP-binding positions include 539-543 (DTPGH) and 593-596 (NKID). Positions 593-596 (NKID) are G4. A G5 region spans residues 629 to 631 (SAK).

This sequence belongs to the TRAFAC class translation factor GTPase superfamily. Classic translation factor GTPase family. IF-2 subfamily.

The protein localises to the cytoplasm. Its function is as follows. One of the essential components for the initiation of protein synthesis. Protects formylmethionyl-tRNA from spontaneous hydrolysis and promotes its binding to the 30S ribosomal subunits. Also involved in the hydrolysis of GTP during the formation of the 70S ribosomal complex. The polypeptide is Translation initiation factor IF-2 (Variovorax paradoxus (strain S110)).